A 238-amino-acid chain; its full sequence is Uridylate kinase (238 aa).

Position 12–15 (12–15) interacts with ATP; that stretch reads KLSG. Gly54 is a binding site for UMP. Residues Gly55 and Arg59 each contribute to the ATP site. Residues Asp74 and 135–142 contribute to the UMP site; that span reads TGNPFFTT. The ATP site is built by Thr162, Asn163, Tyr168, and Asp171.

This sequence belongs to the UMP kinase family. In terms of assembly, homohexamer.

The protein resides in the cytoplasm. The catalysed reaction is UMP + ATP = UDP + ADP. It functions in the pathway pyrimidine metabolism; CTP biosynthesis via de novo pathway; UDP from UMP (UMPK route): step 1/1. Its activity is regulated as follows. Inhibited by UTP. Functionally, catalyzes the reversible phosphorylation of UMP to UDP. The sequence is that of Uridylate kinase from Rhodopseudomonas palustris (strain HaA2).